Here is a 136-residue protein sequence, read N- to C-terminus: Large ribosomal subunit protein uL16 (136 aa).

The protein belongs to the universal ribosomal protein uL16 family. As to quaternary structure, part of the 50S ribosomal subunit.

In terms of biological role, binds 23S rRNA and is also seen to make contacts with the A and possibly P site tRNAs. This Shewanella halifaxensis (strain HAW-EB4) protein is Large ribosomal subunit protein uL16.